We begin with the raw amino-acid sequence, 908 residues long: MKIISPVLSNLVFSRSIKVLLCLLWIGYSQGTTHVLRFGGIFEYVESGPMGAEELAFRFAVNTINRNRTLLPNTTLTYDTQKINLYDSFEASKKACDQLSLGVAAIFGPSHSSSANAVQSICNALGVPHIQTRWKHQVSDNKDSFYVSLYPDFSSLSRAILDLVQFFKWKTVTVVYDDSTGLIRLQELIKAPSRYNLRLKIRQLPADTKDAKPLLKEMKRGKEFHVIFDCSHEMAAGILKQALAMGMMTEYYHYIFTTLDLFALDVEPYRYSGVNMTGFRILNTENTQVSSIIEKWSMERLQAPPKPDSGLLDGFMTTDAALMYDAVHVVSVAVQQFPQMTVSSLQCNRHKPWRFGTRFMSLIKEAHWEGLTGRITFNKTNGLRTDFDLDVISLKEEGLEKIGTWDPSSGLNMTESQKGKPANITDSLSNRSLIVTTILEEPYVLFKKSDKPLYGNDRFEGYCIDLLRELSTILGFTYEIRLVEDGKYGAQDDVNGQWNGMVRELIDHKADLAVAPLAITYVREKVIDFSKPFMTLGISILYRKPNGTNPGVFSFLNPLSPDIWMYILLAYLGVSCVLFVIARFSPYEWYNPHPCNPDSDVVENNFTLLNSFWFGVGALMQQGSELMPKALSTRIVGGIWWFFTLIIISSYTANLAAFLTVERMESPIDSADDLAKQTKIEYGAVEDGATMTFFKKSKISTYDKMWAFMSSRRQSVLVKSNEEGIQRVLTSDYAFLMESTTIEFVTQRNCNLTQIGGLIDSKGYGVGTPMGSPYRDKITIAILQLQEEGKLHMMKEKWWRGNGCPEEESKEASALGVQNIGGIFIVLAAGLVLSVFVAVGEFLYKSKKNAQLEKRSFCSAMVEELRMSLKCQRRLKHKPQAPVIVKTEEVINMHTFNDRRLPGKETMA.

The signal sequence occupies residues 1 to 31 (MKIISPVLSNLVFSRSIKVLLCLLWIGYSQG). The Extracellular portion of the chain corresponds to 32–561 (TTHVLRFGGI…VFSFLNPLSP (530 aa)). 7 N-linked (GlcNAc...) asparagine glycosylation sites follow: Asn-67, Asn-73, Asn-275, Asn-378, Asn-412, Asn-423, and Asn-430. Cys-96 and Cys-347 form a disulfide bridge. L-glutamate is bound by residues Pro-516, Ala-518, and Arg-523. N-linked (GlcNAc...) asparagine glycosylation occurs at Asn-546. The chain crosses the membrane as a helical span at residues 562–582 (DIWMYILLAYLGVSCVLFVIA). The Cytoplasmic segment spans residues 583 to 638 (RFSPYEWYNPHPCNPDSDVVENNFTLLNSFWFGVGALMQQGSELMPKALSTRIVGG). Residues 639 to 659 (IWWFFTLIIISSYTANLAAFL) traverse the membrane as a helical segment. At 660-819 (TVERMESPID…KEASALGVQN (160 aa)) the chain is on the extracellular side. Residues Ala-689, Thr-690, and Glu-738 each coordinate L-glutamate. Cys-750 and Cys-804 form a disulfide bridge. An N-linked (GlcNAc...) asparagine glycan is attached at Asn-751. The helical transmembrane segment at 820–840 (IGGIFIVLAAGLVLSVFVAVG) threads the bilayer. Topologically, residues 841 to 908 (EFLYKSKKNA…RRLPGKETMA (68 aa)) are cytoplasmic. Ser-846 and Ser-868 each carry phosphoserine; by PKC. Lys-886 participates in a covalent cross-link: Glycyl lysine isopeptide (Lys-Gly) (interchain with G-Cter in SUMO1).

Belongs to the glutamate-gated ion channel (TC 1.A.10.1) family. GRIK2 subfamily. Homotetramer and heterotetramer with GRIK5. Tetramers may be formed by the dimerization of dimers. Assembles into a kainate-gated homomeric channel that does not bind AMPA. Can form functional heteromeric receptors with GRIK3. Forms a heteromeric complex with GRIK4 and GRIK5. Interacts with DLG4. Interacts (via C-terminus) with KLHL17 (via kelch repeats); the interaction targets GRIK2 for degradation via ubiquitin-proteasome pathway. Interacts with NETO2. In terms of processing, sumoylation mediates kainate receptor-mediated endocytosis and regulates synaptic transmission. Sumoylation is enhanced by PIAS3 and desumoylated by SENP1. Ubiquitinated. Ubiquitination regulates the GRIK2 levels at the synapse by leading kainate receptor degradation through proteasome. Post-translationally, phosphorylated by PKC at Ser-868 upon agonist activation, this directly enhance sumoylation. Expressed in the hippocampal mossy fiber synapses (at protein level). Most abundant in the cerebellum and the hypothalamus. Expressed in a proportion of dorsal root ganglion (DRG) neurons (13.6%); predominantly small diameter DRG neurons (75%) with the remainder expressed in medium diameter DRG neurons.

It localises to the cell membrane. It is found in the postsynaptic cell membrane. It carries out the reaction Ca(2+)(in) = Ca(2+)(out). The catalysed reaction is Na(+)(in) = Na(+)(out). Its activity is regulated as follows. Cold receptor activity activated by temperatures between 10-19 degrees Celsius. Its function is as follows. Ionotropic glutamate receptor that functions as a cation-permeable ligand-gated ion channel, gated by L-glutamate and the glutamatergic agonist kainic acid. L-glutamate acts as an excitatory neurotransmitter at many synapses in the central nervous system. Binding of the excitatory neurotransmitter L-glutamate induces a conformation change, leading to the opening of the cation channel, and thereby converts the chemical signal to an electrical impulse. The receptor then desensitizes rapidly and enters a transient inactive state, characterized by the presence of bound agonist. Modulates cell surface expression of NETO2. In association with GRIK3, involved in presynaptic facilitation of glutamate release at hippocampal mossy fiber synapses. In terms of biological role, independent of its ionotropic glutamate receptor activity, acts as a thermoreceptor conferring sensitivity to cold temperatures. Functions in dorsal root ganglion neurons. Functionally, ionotropic glutamate receptor that functions as a cation-permeable ligand-gated ion channel, gated by L-glutamate and the glutamatergic agonist kainic acid. This Mus musculus (Mouse) protein is Glutamate receptor ionotropic, kainate 2 (Grik2).